A 403-amino-acid chain; its full sequence is Histidine--tRNA ligase (403 aa).

It belongs to the class-II aminoacyl-tRNA synthetase family. As to quaternary structure, homodimer.

It is found in the cytoplasm. The catalysed reaction is tRNA(His) + L-histidine + ATP = L-histidyl-tRNA(His) + AMP + diphosphate + H(+). This chain is Histidine--tRNA ligase, found in Sulfurovum sp. (strain NBC37-1).